The following is a 173-amino-acid chain: Bacterial deubiquitinase-like protein BilC (173 aa).

Residues histidine 103, histidine 105, and aspartate 115 each coordinate Zn(2+).

The protein belongs to the M67B family. The cofactor is Zn(2+).

Component of the Bil (bacterial ISG15-like) antiviral defense system, composed of BilA, BilB, BilC and BilD. The Bil system specifically conjugates a ubiquitin-like moiety (bilA) to the bacteriophage central tail fiber (CTF, or tip attachment protein J) via reactions involving E1 (bilD) and E2 (bilB). Modifies CTF of phage SECphi27 and SECphi4, which probably interferes with assembly of the phage tail. Also modifies T5 baseplate hub protein pb3 (gene D16), but not gp27 of phage T6 (Bil defends against T6). BilC is a probable metalloprotease that may cleave non-specifically conjugated targets. Bil-encoding bacteria produce mostly defective phage SECphi27, many of which have phage assembly defects, including no tails. SECphi27 phage progeny produced in E.coli with the Bil system inject less DNA into naive host cells, maybe because the phage are less able to adsorb and inject their DNA into host cells. In terms of biological role, expression of the Bil system in E.coli (strain MG1655) confers about 100-fold resistance to phage SECphi27, SECphi18, SECphi6, SECphi4 and T5, but not to SECphi17. When cells expressing the Bil system are infected by phage SECphi27 at low multiplicity of infection (0.03 MOI) the culture survives, at 3.0 MOI the culture collapses at the same time as cells without the Bil system. Its function is as follows. Cleaves a ubiquitin-GFP (Ubl-GFP) fusion protein in vivo. The sequence is that of Bacterial deubiquitinase-like protein BilC from Collimonas sp. (strain OK412).